A 42-amino-acid polypeptide reads, in one-letter code: Photosystem I reaction center subunit IX (42 aa).

Residues 7-27 (YLSTAPVLATLWFGFLAGLLI) traverse the membrane as a helical segment.

This sequence belongs to the PsaJ family.

It localises to the plastid. The protein resides in the chloroplast thylakoid membrane. Functionally, may help in the organization of the PsaE and PsaF subunits. This is Photosystem I reaction center subunit IX from Psilotum nudum (Whisk fern).